Here is a 37-residue protein sequence, read N- to C-terminus: Large ribosomal subunit protein bL36 (37 aa).

This sequence belongs to the bacterial ribosomal protein bL36 family.

The polypeptide is Large ribosomal subunit protein bL36 (Nitrosococcus oceani (strain ATCC 19707 / BCRC 17464 / JCM 30415 / NCIMB 11848 / C-107)).